Consider the following 427-residue polypeptide: MQFSRVLAALCGVLLCASGLFAASGDFCDSSLCLNGGTCLMGQDNDIYCLCPEGFTGLVCNETEKGPCSPNPCFHDAKCLVTEDTQRGDIFTEYICQCPVGYSGIHCELGCSTKLGLEGGAIADSQISASSVYMGFMGLQRWGPELARLYRTGIVNAWTASSYDSKPWIQVDFLRKMRVSGVMTQGASRAGRAEYLKTFKVAYSLDGRRFEFIQDESGTGDKEFMGNQDNNSLKINMFNPTLEAQYIRLYPVSCHRGCTLRFELLGCELHGCSEPLGLKNNTIPDSQITASSSYKTWNLRAFGWYPHLGRLDNQGKINAWTAQSNSAKEWLQVDLGTQKKVTGIITQGARDFGHIQYVASYKVAHSDDGVQWTVYEEQGTSKVFQGNLDNNSHKKNIFEKPFMARYVRVLPLSWHNRITLRLELLGC.

The signal sequence occupies residues 1-22 (MQFSRVLAALCGVLLCASGLFA). EGF-like domains lie at 24–61 (SGDFCDSSLCLNGGTCLMGQDNDIYCLCPEGFTGLVCN) and 64–108 (EKGP…IHCE). 3 disulfide bridges follow: Cys-28/Cys-39, Cys-33/Cys-49, and Cys-51/Cys-60. Residue Asn-61 is glycosylated (N-linked (GlcNAc...) asparagine). Disulfide bonds link Cys-68/Cys-79, Cys-73/Cys-96, Cys-98/Cys-107, Cys-111/Cys-267, Cys-254/Cys-258, and Cys-272/Cys-427. Residues 87-89 (RGD) carry the Cell attachment site motif. 2 consecutive F5/8 type C domains span residues 111-267 (CSTK…LLGC) and 272-427 (CSEP…LLGC). Asn-230 is a glycosylation site (N-linked (GlcNAc...) asparagine). 2 N-linked (GlcNAc...) asparagine glycosylation sites follow: Asn-280 and Asn-390.

Spleen, lung, heart, brain and muscle.

The protein localises to the membrane. The protein resides in the secreted. It is found in the cytoplasmic vesicle. Its subcellular location is the secretory vesicle. It localises to the acrosome membrane. In terms of biological role, contributes to phagocytic removal of apoptotic cells in many tissues. Plays an important role in the maintenance of intestinal epithelial homeostasis and the promotion of mucosal healing. Promotes VEGF-dependent neovascularization. Specific ligand for the alpha-v/beta-3 and alpha-v/beta-5 receptors. Also binds to phosphatidylserine-enriched cell surfaces in a receptor-independent manner. Zona pellucida-binding protein which may play a role in gamete interaction. Appears to participate in the O-acetylation of GD3 ganglioside sialic acid. This Rattus norvegicus (Rat) protein is Lactadherin (Mfge8).